Reading from the N-terminus, the 293-residue chain is Triosephosphate isomerase (293 aa).

25 to 27 (NWK) contacts substrate. Residue His117 is the Electrophile of the active site. Glu218 serves as the catalytic Proton acceptor.

The protein belongs to the triosephosphate isomerase family. As to quaternary structure, homodimer.

It is found in the cytoplasm. The enzyme catalyses D-glyceraldehyde 3-phosphate = dihydroxyacetone phosphate. The protein operates within carbohydrate biosynthesis; gluconeogenesis. It participates in carbohydrate degradation; glycolysis; D-glyceraldehyde 3-phosphate from glycerone phosphate: step 1/1. Involved in the gluconeogenesis. Catalyzes stereospecifically the conversion of dihydroxyacetone phosphate (DHAP) to D-glyceraldehyde-3-phosphate (G3P). The sequence is that of Triosephosphate isomerase from Tropheryma whipplei (strain TW08/27) (Whipple's bacillus).